The chain runs to 114 residues: Large ribosomal subunit protein uL18 (114 aa).

Belongs to the universal ribosomal protein uL18 family. In terms of assembly, part of the 50S ribosomal subunit; part of the 5S rRNA/L5/L18/L25 subcomplex. Contacts the 5S and 23S rRNAs.

Functionally, this is one of the proteins that bind and probably mediate the attachment of the 5S RNA into the large ribosomal subunit, where it forms part of the central protuberance. In Azobacteroides pseudotrichonymphae genomovar. CFP2, this protein is Large ribosomal subunit protein uL18.